A 188-amino-acid polypeptide reads, in one-letter code: EP300-interacting inhibitor of differentiation 1 (188 aa).

The tract at residues 1–122 is disordered; that stretch reads MSEMAELSEL…PEEEQLSGAG (122 aa). 2 stretches are compositionally biased toward acidic residues: residues 53 to 64 and 94 to 117; these read LEEEGPMEEEEA and FESE…EEEQ. Residues 55 to 121 form an interaction with NR0B2 region; sequence EEGPMEEEEA…YPEEEQLSGA (67 aa). Residues 179-183 carry the LXCXE motif motif; that stretch reads LGCDE.

In terms of assembly, interacts via its LXCXE motif with the entire pocket region of RB1. Interacts with EP300, NR0B2 and TRIM27.

Its subcellular location is the nucleus. It localises to the cytoplasm. Its function is as follows. Interacts with RB1 and EP300 and acts as a repressor of MYOD1 transactivation. Inhibits EP300 and CBP histone acetyltransferase activity. May be involved in coupling cell cycle exit to the transcriptional activation of genes required for cellular differentiation. May act as a candidate coinhibitory factor for NR0B2 that can be directly linked to transcription inhibitory mechanisms. In Pongo abelii (Sumatran orangutan), this protein is EP300-interacting inhibitor of differentiation 1.